A 294-amino-acid polypeptide reads, in one-letter code: NAD kinase (294 aa).

Catalysis depends on Asp74, which acts as the Proton acceptor. NAD(+) is bound by residues 74–75 (DG), 148–149 (ND), Arg159, Arg176, Asp178, 189–194 (TAYALS), and Gln247.

It belongs to the NAD kinase family. A divalent metal cation is required as a cofactor.

The protein resides in the cytoplasm. The catalysed reaction is NAD(+) + ATP = ADP + NADP(+) + H(+). Functionally, involved in the regulation of the intracellular balance of NAD and NADP, and is a key enzyme in the biosynthesis of NADP. Catalyzes specifically the phosphorylation on 2'-hydroxyl of the adenosine moiety of NAD to yield NADP. The sequence is that of NAD kinase from Azoarcus sp. (strain BH72).